Reading from the N-terminus, the 339-residue chain is Tetraacyldisaccharide 4'-kinase (339 aa).

ATP is bound at residue Val62–Thr69.

Belongs to the LpxK family.

It carries out the reaction a lipid A disaccharide + ATP = a lipid IVA + ADP + H(+). The protein operates within glycolipid biosynthesis; lipid IV(A) biosynthesis; lipid IV(A) from (3R)-3-hydroxytetradecanoyl-[acyl-carrier-protein] and UDP-N-acetyl-alpha-D-glucosamine: step 6/6. Functionally, transfers the gamma-phosphate of ATP to the 4'-position of a tetraacyldisaccharide 1-phosphate intermediate (termed DS-1-P) to form tetraacyldisaccharide 1,4'-bis-phosphate (lipid IVA). This chain is Tetraacyldisaccharide 4'-kinase, found in Xylella fastidiosa (strain M12).